We begin with the raw amino-acid sequence, 329 residues long: Acrosin (329 aa).

A signal peptide spans 1–17 (MLPTAVLLVLAVSVVAR). The N-linked (GlcNAc...) asparagine glycan is linked to Asn19. 6 disulfide bridges follow: Cys22–Cys152, Cys26–Cys160, Cys71–Cys87, Cys175–Cys244, Cys207–Cys223, and Cys234–Cys264. The region spanning 40-288 (IIGGQDAAHG…YLNWIASKIG (249 aa)) is the Peptidase S1 domain. Catalysis depends on charge relay system residues His86 and Asp140. Asn208 carries N-linked (GlcNAc...) asparagine glycosylation. Catalysis depends on Ser238, which acts as the Charge relay system.

This sequence belongs to the peptidase S1 family. In terms of assembly, heavy chain (catalytic) and a light chain linked by two disulfide bonds. Forms a heterodimer with SERPINA5.

It catalyses the reaction Preferential cleavage: Arg-|-Xaa, Lys-|-Xaa.. Its activity is regulated as follows. Inhibited by SERPINA5. Functionally, acrosin is the major protease of mammalian spermatozoa. It is a serine protease of trypsin-like cleavage specificity, it is synthesized in a zymogen form, proacrosin and stored in the acrosome. The polypeptide is Acrosin (ACR) (Ovis aries (Sheep)).